Consider the following 197-residue polypeptide: Transposon Tn552 resolvase (197 aa).

One can recognise a Resolvase/invertase-type recombinase catalytic domain in the interval Met1–Gly136. Ser9 serves as the catalytic O-(5'-phospho-DNA)-serine intermediate. The H-T-H motif DNA-binding region spans Ile163–Asn182.

The protein belongs to the site-specific recombinase resolvase family.

Functionally, resolvase catalyzes the resolution (a site-specific recombination) of the cointegrated replicon to yield the final transposition products. The polypeptide is Transposon Tn552 resolvase (tnpR) (Staphylococcus aureus).